Reading from the N-terminus, the 455-residue chain is Transcription factor mokH (455 aa).

A disordered region spans residues 1–22 (MALSPVQDPPSHTDKTMPRRAF). The segment at residues 26 to 58 (CDRCHAQKIKCIGSEGAVARASCQRCQQAGLRC) is a DNA-binding region (zn(2)-C6 fungal-type). Disordered stretches follow at residues 68-113 (KLPK…DSSG) and 296-317 (LTPL…RSSV). Positions 75-88 (AESSPASSTAGLHT) are enriched in polar residues. Over residues 89–113 (SSSDSSPPVPSDGLPLDLPGPDSSG) the composition is skewed to low complexity.

The protein resides in the nucleus. Its function is as follows. Transcription factor that regulates the gene cluster that mediates the biosynthesis of monakolin K, also known as lovastatin, and which acts as a potent competitive inhibitor of HMG-CoA reductase. Monakolin K biosynthesis is performed in two stages. The first stage is catalyzed by the nonaketide synthase mokA, which belongs to type I polyketide synthases and catalyzes the iterative nine-step formation of the polyketide. This PKS stage is completed by the action of dehydrogenase mokE, which catalyzes the NADPH-dependent reduction of the unsaturated tetra-, penta- and heptaketide intermediates that arise during the mokA-mediated biosynthesis of the nonaketide chain and leads to dihydromonacolin L. Covalently bound dihydromonacolin L is released from mokA by the mokD esterase. Conversion of dihydromonacolin L into monacolin L and then monacolin J is subsequently performed with the participation of molecular oxygen and P450 monoogygenase mokC. Finally, mokF performs the conversion of monacoline J to monacoline K through the addition of the side-chain diketide moiety (2R)-2-methylbutanoate produced by the diketide synthase mokB. HMG-CoA reductase mokG may act as a down-regulator of monacolin K production. The polypeptide is Transcription factor mokH (Monascus pilosus (Red mold)).